The sequence spans 235 residues: Probable flavin-dependent thymidylate synthase (235 aa).

Positions 1–229 constitute a ThyX domain; it reads MKVQLIASTI…PNTYQDIPTE (229 aa). FAD is bound by residues serine 70 and 93–95; that span reads RHR. DUMP-binding positions include 90-93, 103-105, and arginine 168; these read ELER and SQR. The ThyX motif signature appears at 93 to 103; the sequence is RHRHLSFSVVS. Residue 184–186 coordinates FAD; it reads NHR. Arginine 195 provides a ligand contact to dUMP. The active-site Involved in ionization of N3 of dUMP, leading to its activation is arginine 195.

Belongs to the thymidylate synthase ThyX family. In terms of assembly, homotetramer. FAD serves as cofactor.

The enzyme catalyses dUMP + (6R)-5,10-methylene-5,6,7,8-tetrahydrofolate + NADPH + H(+) = dTMP + (6S)-5,6,7,8-tetrahydrofolate + NADP(+). Its pathway is pyrimidine metabolism; dTTP biosynthesis. Catalyzes the reductive methylation of 2'-deoxyuridine-5'-monophosphate (dUMP) to 2'-deoxythymidine-5'-monophosphate (dTMP) while utilizing 5,10-methylenetetrahydrofolate (mTHF) as the methyl donor, and NADPH and FADH(2) as the reductant. The sequence is that of Probable flavin-dependent thymidylate synthase (48) from Mycobacterium (Mycobacteriophage D29).